The primary structure comprises 67 residues: Large ribosomal subunit protein bL35 (67 aa).

It belongs to the bacterial ribosomal protein bL35 family.

The protein is Large ribosomal subunit protein bL35 of Bartonella henselae (strain ATCC 49882 / DSM 28221 / CCUG 30454 / Houston 1) (Rochalimaea henselae).